Here is a 469-residue protein sequence, read N- to C-terminus: 3-isopropylmalate dehydratase large subunit (469 aa).

Positions 347, 410, and 413 each coordinate [4Fe-4S] cluster.

Belongs to the aconitase/IPM isomerase family. LeuC type 1 subfamily. As to quaternary structure, heterodimer of LeuC and LeuD. Requires [4Fe-4S] cluster as cofactor.

The enzyme catalyses (2R,3S)-3-isopropylmalate = (2S)-2-isopropylmalate. Its pathway is amino-acid biosynthesis; L-leucine biosynthesis; L-leucine from 3-methyl-2-oxobutanoate: step 2/4. Catalyzes the isomerization between 2-isopropylmalate and 3-isopropylmalate, via the formation of 2-isopropylmaleate. The polypeptide is 3-isopropylmalate dehydratase large subunit (Burkholderia vietnamiensis (strain G4 / LMG 22486) (Burkholderia cepacia (strain R1808))).